The chain runs to 429 residues: Ribosomal RNA small subunit methyltransferase B (429 aa).

S-adenosyl-L-methionine is bound by residues 254–260, aspartate 277, aspartate 303, and aspartate 322; that span reads CAAPGGK. Residue cysteine 375 is the Nucleophile of the active site.

Belongs to the class I-like SAM-binding methyltransferase superfamily. RsmB/NOP family.

Its subcellular location is the cytoplasm. The enzyme catalyses cytidine(967) in 16S rRNA + S-adenosyl-L-methionine = 5-methylcytidine(967) in 16S rRNA + S-adenosyl-L-homocysteine + H(+). Specifically methylates the cytosine at position 967 (m5C967) of 16S rRNA. This chain is Ribosomal RNA small subunit methyltransferase B, found in Escherichia fergusonii (strain ATCC 35469 / DSM 13698 / CCUG 18766 / IAM 14443 / JCM 21226 / LMG 7866 / NBRC 102419 / NCTC 12128 / CDC 0568-73).